The primary structure comprises 116 residues: uncharacterized protein (116 aa).

The next 2 membrane-spanning stretches (helical) occupy residues 55–77 (LSYSYHVIVYLCVLCKVYILYSF) and 87–109 (FSYGSSLLYSLCSNLYIYIYAAL).

The protein localises to the membrane. This is an uncharacterized protein from Saccharomyces cerevisiae (strain ATCC 204508 / S288c) (Baker's yeast).